Reading from the N-terminus, the 37-residue chain is M-oxotoxin-Ot2a (37 aa).

As to expression, expressed by the venom gland.

It is found in the secreted. Disrupts biological membranes, particularly those rich in phosphocholine. Has antimicrobial activity against Gram-negative bacterium E.coli, Gram-positive bacteria B.subtilis and S.aureus, and hemolytic activity against sheep, pig and guinea pig red blood cells. Has insecticidal activity against S.frugiperda ovarian cells by opening non-selective ion channels. Enhances the insecticidal activity of spider venom neurotoxic peptides. This Oxyopes takobius (Lynx spider) protein is M-oxotoxin-Ot2a.